We begin with the raw amino-acid sequence, 118 residues long: Small ribosomal subunit protein uS13 (118 aa).

The segment at 93–118 (RGLPVRGQRTKTNARTRKGPRKPIRK) is disordered.

Belongs to the universal ribosomal protein uS13 family. In terms of assembly, part of the 30S ribosomal subunit. Forms a loose heterodimer with protein S19. Forms two bridges to the 50S subunit in the 70S ribosome.

Located at the top of the head of the 30S subunit, it contacts several helices of the 16S rRNA. In the 70S ribosome it contacts the 23S rRNA (bridge B1a) and protein L5 of the 50S subunit (bridge B1b), connecting the 2 subunits; these bridges are implicated in subunit movement. Contacts the tRNAs in the A and P-sites. In Azotobacter vinelandii (strain DJ / ATCC BAA-1303), this protein is Small ribosomal subunit protein uS13.